Consider the following 366-residue polypeptide: Tetraacyldisaccharide 4'-kinase (366 aa).

51–58 (TVGGTGKT) contributes to the ATP binding site.

It belongs to the LpxK family.

It catalyses the reaction a lipid A disaccharide + ATP = a lipid IVA + ADP + H(+). It functions in the pathway glycolipid biosynthesis; lipid IV(A) biosynthesis; lipid IV(A) from (3R)-3-hydroxytetradecanoyl-[acyl-carrier-protein] and UDP-N-acetyl-alpha-D-glucosamine: step 6/6. Transfers the gamma-phosphate of ATP to the 4'-position of a tetraacyldisaccharide 1-phosphate intermediate (termed DS-1-P) to form tetraacyldisaccharide 1,4'-bis-phosphate (lipid IVA). This Phocaeicola vulgatus (strain ATCC 8482 / DSM 1447 / JCM 5826 / CCUG 4940 / NBRC 14291 / NCTC 11154) (Bacteroides vulgatus) protein is Tetraacyldisaccharide 4'-kinase.